Consider the following 226-residue polypeptide: Agamous-like MADS-box protein AP3 (226 aa).

An MADS-box domain is found at 1-61 (MARGKIEIKR…GKLHEYISPS (61 aa)). Residues 84–174 (YERMQENLKK…LHEFDARDRD (91 aa)) enclose the K-box domain.

Expressed during flower development in stamens and petals.

Its subcellular location is the nucleus. Functionally, probable transcription factor involved in flower development. This Vitis vinifera (Grape) protein is Agamous-like MADS-box protein AP3.